The chain runs to 607 residues: (R)-limonene synthase 1, chloroplastic (607 aa).

Residues 1 to 52 constitute a chloroplast transit peptide; that stretch reads MSSCINPSTLATSVNGFKCLPLATNRAAIRIMAKNKPVQCLVSTKYDNLTVD. D343 and D347 together coordinate Mn(2+). 5 residues coordinate substrate: D343, D347, R485, D488, and K504. The short motif at 343 to 347 is the DDXXD motif element; sequence DDIYD. D488 contributes to the Mn(2+) binding site.

Belongs to the terpene synthase family. Requires Mg(2+) as cofactor. Mn(2+) is required as a cofactor.

It localises to the plastid. The protein resides in the chloroplast. It carries out the reaction (2E)-geranyl diphosphate = (4R)-limonene + diphosphate. With respect to regulation, inhibited by 2-fluorogeranyl diphosphate (FGPP) and 2-fluoroneryl diphosphate (FNPP). Catalyzes the conversion of geranyl diphosphate to (+)-(4R)-limonene. Produces exclusively the (+)-enantiomer. Can use neryl diphosphate as substrate. Has no activity with farnesyl diphosphate. The chain is (R)-limonene synthase 1, chloroplastic from Citrus sinensis (Sweet orange).